The sequence spans 313 residues: Glycine--tRNA ligase alpha subunit (313 aa).

This sequence belongs to the class-II aminoacyl-tRNA synthetase family. In terms of assembly, tetramer of two alpha and two beta subunits.

The protein resides in the cytoplasm. The enzyme catalyses tRNA(Gly) + glycine + ATP = glycyl-tRNA(Gly) + AMP + diphosphate. The protein is Glycine--tRNA ligase alpha subunit of Leuconostoc mesenteroides subsp. mesenteroides (strain ATCC 8293 / DSM 20343 / BCRC 11652 / CCM 1803 / JCM 6124 / NCDO 523 / NBRC 100496 / NCIMB 8023 / NCTC 12954 / NRRL B-1118 / 37Y).